Reading from the N-terminus, the 277-residue chain is Tumor necrosis factor-inducible gene 6 protein (277 aa).

The first 17 residues, 1–17, serve as a signal peptide directing secretion; the sequence is MIILIYLFLLLWEDTQG. Residues 36–129 enclose the Link domain; sequence GVYHREARSG…SERWDAYCYN (94 aa). Cystine bridges form between C58–C127, C82–C103, and C135–C161. The N-linked (GlcNAc...) asparagine glycan is linked to N118. One can recognise a CUB domain in the interval 135–247; sequence CGGVFTDPKQ…GGFQIKYVAM (113 aa). Residues E183, D191, D232, S234, and V235 each contribute to the Ca(2+) site. The cysteines at positions 188 and 210 are disulfide-linked. N258 carries an N-linked (GlcNAc...) asparagine glycan.

In terms of assembly, interacts (via Link domain) with inter-alpha-inhibitor (I-alpha-I) component bikunin. Interacts with ITIH2/HC2; this interaction is required for transesterification of the HC to hyaluronan. Interacts (via Link and CUB domains) with ITIH1. Chondroitin sulfate may be required for the stability of the complex. Interacts (via Link domain) with various C-X-C and C-C chemokines including PF4, CXCL8, CXCL11, CXCL12, CCL2, CCL7, CCL19, CCL21, and CCL27; this interaction interferes with chemokine binding to glycosaminoglycans. Interacts (primarily via Link domain) with BMP2; this interaction is inhibited by hyaluronan. Interacts (via both Link and CUB domains) with TNFSF11. Interacts (via CUB domain) with FN1 (via type III repeats 9-14); this interaction enhances fibronectin fibril assembly. TNFAIP6 may act as a bridging molecule between FN1 and THBS1. N-glycosylated. In terms of tissue distribution, expressed in airway epithelium and submucosal gland (at protein level). Colocalizes with bikunin at the ciliary border. Present in bronchoalveolar lavage fluid (at protein level). Expressed in mesenchymal stem cells. Found in the synovial fluid of patients with rheumatoid arthritis.

It localises to the secreted. In terms of biological role, major regulator of extracellular matrix organization during tissue remodeling. Catalyzes the transfer of a heavy chain (HC) from inter-alpha-inhibitor (I-alpha-I) complex to hyaluronan. Cleaves the ester bond between the C-terminus of the HC and GalNAc residue of the chondroitin sulfate chain in I-alpha-I complex followed by transesterification of the HC to hyaluronan. In the process, potentiates the antiprotease function of I-alpha-I complex through release of free bikunin. Acts as a catalyst in the formation of hyaluronan-HC oligomers and hyaluronan-rich matrix surrounding the cumulus cell-oocyte complex, a necessary step for oocyte fertilization. Assembles hyaluronan in pericellular matrices that serve as platforms for receptor clustering and signaling. Enables binding of hyaluronan deposited on the surface of macrophages to LYVE1 on lymphatic endothelium and facilitates macrophage extravasation. Alters hyaluronan binding to functionally latent CD44 on vascular endothelium, switching CD44 into an active state that supports leukocyte rolling. Modulates the interaction of chemokines with extracellular matrix components and proteoglycans on endothelial cell surface, likely preventing chemokine gradient formation. In a negative feedback mechanism, may limit excessive neutrophil recruitment at inflammatory sites by antagonizing the association of CXCL8 with glycosaminoglycans on vascular endothelium. Has a role in osteogenesis and bone remodeling. Inhibits BMP2-dependent differentiation of mesenchymal stem cell to osteoblasts. Protects against bone erosion during inflammation by inhibiting TNFSF11/RANKL-dependent osteoclast activation. The sequence is that of Tumor necrosis factor-inducible gene 6 protein (TNFAIP6) from Homo sapiens (Human).